Consider the following 189-residue polypeptide: Probable UbiX-like flavin prenyltransferase (189 aa).

FMN contacts are provided by residues Gly9–Ser11, Ser36, Ser87–Thr90, and Arg122.

The protein belongs to the UbiX/PAD1 family. YclB subfamily. In terms of assembly, homododecamer.

The enzyme catalyses dimethylallyl phosphate + FMNH2 = prenylated FMNH2 + phosphate. Functionally, involved in the non-oxidative decarboxylation and detoxification of phenolic derivatives under anaerobic conditions. Flavin prenyltransferase that catalyzes the synthesis of the prenylated FMN cofactor (prenyl-FMN) for phenolic acid decarboxylase. This is Probable UbiX-like flavin prenyltransferase from Sedimentibacter hydroxybenzoicus (Clostridium hydroxybenzoicum).